We begin with the raw amino-acid sequence, 376 residues long: Queuine tRNA-ribosyltransferase (376 aa).

The active-site Proton acceptor is D93. Substrate contacts are provided by residues 93–97 (DSGGF), D147, Q190, and G217. The interval 248–254 (GVGTPDD) is RNA binding. Catalysis depends on D267, which acts as the Nucleophile. Residues 272-276 (TRSGR) form an RNA binding; important for wobble base 34 recognition region.

Belongs to the queuine tRNA-ribosyltransferase family. As to quaternary structure, homodimer. Within each dimer, one monomer is responsible for RNA recognition and catalysis, while the other monomer binds to the replacement base PreQ1.

It catalyses the reaction 7-aminomethyl-7-carbaguanine + guanosine(34) in tRNA = 7-aminomethyl-7-carbaguanosine(34) in tRNA + guanine. The protein operates within tRNA modification; tRNA-queuosine biosynthesis. Catalyzes the base-exchange of a guanine (G) residue with the queuine precursor 7-aminomethyl-7-deazaguanine (PreQ1) at position 34 (anticodon wobble position) in tRNAs with GU(N) anticodons (tRNA-Asp, -Asn, -His and -Tyr). Catalysis occurs through a double-displacement mechanism. The nucleophile active site attacks the C1' of nucleotide 34 to detach the guanine base from the RNA, forming a covalent enzyme-RNA intermediate. The proton acceptor active site deprotonates the incoming PreQ1, allowing a nucleophilic attack on the C1' of the ribose to form the product. After dissociation, two additional enzymatic reactions on the tRNA convert PreQ1 to queuine (Q), resulting in the hypermodified nucleoside queuosine (7-(((4,5-cis-dihydroxy-2-cyclopenten-1-yl)amino)methyl)-7-deazaguanosine). This chain is Queuine tRNA-ribosyltransferase, found in Rhizobium meliloti (strain 1021) (Ensifer meliloti).